The sequence spans 130 residues: Small ribosomal subunit protein uS8 (130 aa).

Belongs to the universal ribosomal protein uS8 family. Part of the 30S ribosomal subunit. Contacts proteins S5 and S12.

One of the primary rRNA binding proteins, it binds directly to 16S rRNA central domain where it helps coordinate assembly of the platform of the 30S subunit. The polypeptide is Small ribosomal subunit protein uS8 (Yersinia enterocolitica serotype O:8 / biotype 1B (strain NCTC 13174 / 8081)).